The chain runs to 412 residues: Poly-beta-1,6-N-acetyl-D-glucosamine synthase (412 aa).

4 helical membrane-spanning segments follow: residues 6–26 (FLLF…IYFY), 298–318 (IISI…FITA), 332–352 (IFLL…TVAL), and 366–386 (LIFV…VVLV).

It belongs to the glycosyltransferase 2 family.

It localises to the cell membrane. Functionally, N-acetylglucosaminyltransferase that catalyzes the polymerization of single monomer units of UDP-N-acetylglucosamine to produce the linear homomer poly-beta-1,6-N-acetyl-D-glucosamine (PNAG, also referred to as PIA), a biofilm adhesin polysaccharide. Requires IcaD for full activity. The sequence is that of Poly-beta-1,6-N-acetyl-D-glucosamine synthase (icaA) from Staphylococcus aureus (strain NCTC 8325 / PS 47).